The primary structure comprises 210 residues: Protein GrpE (210 aa).

The span at 1 to 12 (MSDQAKDERAPS) shows a compositional bias: basic and acidic residues. Disordered regions lie at residues 1–26 (MSDQ…RTEG) and 191–210 (IAAE…EKDA).

Belongs to the GrpE family. In terms of assembly, homodimer.

Its subcellular location is the cytoplasm. Its function is as follows. Participates actively in the response to hyperosmotic and heat shock by preventing the aggregation of stress-denatured proteins, in association with DnaK and GrpE. It is the nucleotide exchange factor for DnaK and may function as a thermosensor. Unfolded proteins bind initially to DnaJ; upon interaction with the DnaJ-bound protein, DnaK hydrolyzes its bound ATP, resulting in the formation of a stable complex. GrpE releases ADP from DnaK; ATP binding to DnaK triggers the release of the substrate protein, thus completing the reaction cycle. Several rounds of ATP-dependent interactions between DnaJ, DnaK and GrpE are required for fully efficient folding. The chain is Protein GrpE from Mesorhizobium japonicum (strain LMG 29417 / CECT 9101 / MAFF 303099) (Mesorhizobium loti (strain MAFF 303099)).